The chain runs to 657 residues: Probable Xaa-Pro aminopeptidase P (657 aa).

Mn(2+) contacts are provided by Asp-453, Asp-464, Glu-562, and Glu-576.

The protein belongs to the peptidase M24B family. Mn(2+) is required as a cofactor.

The catalysed reaction is Release of any N-terminal amino acid, including proline, that is linked to proline, even from a dipeptide or tripeptide.. In terms of biological role, catalyzes the removal of a penultimate prolyl residue from the N-termini of peptides. The polypeptide is Probable Xaa-Pro aminopeptidase P (ampp) (Talaromyces marneffei (strain ATCC 18224 / CBS 334.59 / QM 7333) (Penicillium marneffei)).